The primary structure comprises 301 residues: UDP-N-acetylenolpyruvoylglucosamine reductase (301 aa).

The 165-residue stretch at V30 to G194 folds into the FAD-binding PCMH-type domain. R173 is an active-site residue. S223 acts as the Proton donor in catalysis. The active site involves E293.

Belongs to the MurB family. FAD is required as a cofactor.

The protein localises to the cytoplasm. The catalysed reaction is UDP-N-acetyl-alpha-D-muramate + NADP(+) = UDP-N-acetyl-3-O-(1-carboxyvinyl)-alpha-D-glucosamine + NADPH + H(+). It functions in the pathway cell wall biogenesis; peptidoglycan biosynthesis. Cell wall formation. The sequence is that of UDP-N-acetylenolpyruvoylglucosamine reductase from Streptococcus pneumoniae (strain Hungary19A-6).